The chain runs to 69 residues: Small, acid-soluble spore protein C4 (69 aa).

This sequence belongs to the alpha/beta-type SASP family.

Functionally, SASP are bound to spore DNA. They are double-stranded DNA-binding proteins that cause DNA to change to an a-like conformation. They protect the DNA backbone from chemical and enzymatic cleavage and are thus involved in dormant spore's high resistance to UV light. The protein is Small, acid-soluble spore protein C4 (SASP-C4) of Priestia megaterium (Bacillus megaterium).